The following is a 478-amino-acid chain: Aspartyl/glutamyl-tRNA(Asn/Gln) amidotransferase subunit B 1 (478 aa).

The protein belongs to the GatB/GatE family. GatB subfamily. Heterotrimer of A, B and C subunits.

The catalysed reaction is L-glutamyl-tRNA(Gln) + L-glutamine + ATP + H2O = L-glutaminyl-tRNA(Gln) + L-glutamate + ADP + phosphate + H(+). The enzyme catalyses L-aspartyl-tRNA(Asn) + L-glutamine + ATP + H2O = L-asparaginyl-tRNA(Asn) + L-glutamate + ADP + phosphate + 2 H(+). Allows the formation of correctly charged Asn-tRNA(Asn) or Gln-tRNA(Gln) through the transamidation of misacylated Asp-tRNA(Asn) or Glu-tRNA(Gln) in organisms which lack either or both of asparaginyl-tRNA or glutaminyl-tRNA synthetases. The reaction takes place in the presence of glutamine and ATP through an activated phospho-Asp-tRNA(Asn) or phospho-Glu-tRNA(Gln). This chain is Aspartyl/glutamyl-tRNA(Asn/Gln) amidotransferase subunit B 1, found in Syntrophus aciditrophicus (strain SB).